Reading from the N-terminus, the 125-residue chain is Phosphoribosyl-AMP cyclohydrolase (125 aa).

Asp74 serves as a coordination point for Mg(2+). Residue Cys75 participates in Zn(2+) binding. Mg(2+) is bound by residues Asp76 and Asp78. Residues Cys92 and Cys99 each coordinate Zn(2+).

The protein belongs to the PRA-CH family. Homodimer. The cofactor is Mg(2+). It depends on Zn(2+) as a cofactor.

It is found in the cytoplasm. It carries out the reaction 1-(5-phospho-beta-D-ribosyl)-5'-AMP + H2O = 1-(5-phospho-beta-D-ribosyl)-5-[(5-phospho-beta-D-ribosylamino)methylideneamino]imidazole-4-carboxamide. It participates in amino-acid biosynthesis; L-histidine biosynthesis; L-histidine from 5-phospho-alpha-D-ribose 1-diphosphate: step 3/9. Functionally, catalyzes the hydrolysis of the adenine ring of phosphoribosyl-AMP. The sequence is that of Phosphoribosyl-AMP cyclohydrolase from Geobacter sp. (strain M21).